We begin with the raw amino-acid sequence, 171 residues long: Alpha-amylase/trypsin inhibitor CMd (171 aa).

The first 24 residues, 1 to 24 (MACKSSRSLLLLATVMVSVFAAAA), serve as a signal peptide directing secretion.

The protein belongs to the protease inhibitor I6 (cereal trypsin/alpha-amylase inhibitor) family. Heterotetramer of one CMa, one CMb and two CMd chains. Post-translationally, five disulfide bonds, which are essential for the inhibitor activity, are probably present. In terms of tissue distribution, endosperm.

The protein localises to the secreted. Functionally, part of a complex with inhibitory activity, but CMd is inactive as a separate subunit. The sequence is that of Alpha-amylase/trypsin inhibitor CMd (IAT3) from Hordeum vulgare (Barley).